A 223-amino-acid chain; its full sequence is UPF0502 protein Sbal_1765 (223 aa).

This sequence belongs to the UPF0502 family.

The polypeptide is UPF0502 protein Sbal_1765 (Shewanella baltica (strain OS155 / ATCC BAA-1091)).